A 438-amino-acid polypeptide reads, in one-letter code: 3-phosphoshikimate 1-carboxyvinyltransferase (438 aa).

3-phosphoshikimate is bound by residues K23, S24, and R28. K23 provides a ligand contact to phosphoenolpyruvate. Residues G94 and R122 each contribute to the phosphoenolpyruvate site. 4 residues coordinate 3-phosphoshikimate: S167, Q169, D321, and K348. Q169 contacts phosphoenolpyruvate. D321 acts as the Proton acceptor in catalysis. Residues R352 and R393 each contribute to the phosphoenolpyruvate site.

This sequence belongs to the EPSP synthase family. As to quaternary structure, monomer.

The protein resides in the cytoplasm. The enzyme catalyses 3-phosphoshikimate + phosphoenolpyruvate = 5-O-(1-carboxyvinyl)-3-phosphoshikimate + phosphate. It participates in metabolic intermediate biosynthesis; chorismate biosynthesis; chorismate from D-erythrose 4-phosphate and phosphoenolpyruvate: step 6/7. Catalyzes the transfer of the enolpyruvyl moiety of phosphoenolpyruvate (PEP) to the 5-hydroxyl of shikimate-3-phosphate (S3P) to produce enolpyruvyl shikimate-3-phosphate and inorganic phosphate. This is 3-phosphoshikimate 1-carboxyvinyltransferase from Helicobacter hepaticus (strain ATCC 51449 / 3B1).